A 147-amino-acid polypeptide reads, in one-letter code: Protein phosphatase 1 regulatory subunit 14A (147 aa).

The span at 1-11 (MAAQRLGKRVL) shows a compositional bias: basic residues. Residues 1–37 (MAAQRLGKRVLSKLQSPSRARGPGGSPGGLQKRHARV) form a disordered region. Phosphoserine is present on Ser26. The interval 35–120 (ARVTVKYDRR…LLVKLRGLHK (86 aa)) is inhibitory. Phosphothreonine is present on Thr38. The interval 118–147 (LHKQPGLRQPSPSGDGSLSPRQDRARTAPP) is disordered. Polar residues predominate over residues 127–137 (PSPSGDGSLSP). Phosphoserine occurs at positions 128, 134, and 136. A compositionally biased stretch (basic and acidic residues) spans 138-147 (RQDRARTAPP).

This sequence belongs to the PP1 inhibitor family. Phosphorylation of Thr-38 induces a conformation change. As to expression, detected in aorta smooth muscle and bladder.

It is found in the cytoplasm. Functionally, inhibitor of PPP1CA. Has over 1000-fold higher inhibitory activity when phosphorylated, creating a molecular switch for regulating the phosphorylation status of PPP1CA substrates and smooth muscle contraction. This chain is Protein phosphatase 1 regulatory subunit 14A (CPI17), found in Sus scrofa (Pig).